Here is a 297-residue protein sequence, read N- to C-terminus: Tyrosine recombinase XerD (297 aa).

Residues 2 to 86 (KKLDPIIEQF…CLRKFFRFLC (85 aa)) enclose the Core-binding (CB) domain. The 185-residue stretch at 107 to 291 (QLPKSLSEEQ…AKTRLKSIHK (185 aa)) folds into the Tyr recombinase domain. Active-site residues include arginine 147, lysine 171, histidine 243, arginine 246, and histidine 269. Catalysis depends on tyrosine 278, which acts as the O-(3'-phospho-DNA)-tyrosine intermediate.

Belongs to the 'phage' integrase family. XerD subfamily. As to quaternary structure, forms a cyclic heterotetrameric complex composed of two molecules of XerC and two molecules of XerD.

The protein resides in the cytoplasm. Its function is as follows. Site-specific tyrosine recombinase, which acts by catalyzing the cutting and rejoining of the recombining DNA molecules. The XerC-XerD complex is essential to convert dimers of the bacterial chromosome into monomers to permit their segregation at cell division. It also contributes to the segregational stability of plasmids. The chain is Tyrosine recombinase XerD from Haemophilus ducreyi (strain 35000HP / ATCC 700724).